The following is a 609-amino-acid chain: Beta-(1--&gt;2)glucan export ATP-binding/permease protein NdvA (609 aa).

Positions 21-311 constitute an ABC transmembrane type-1 domain; it reads GWILAGANLL…VVSFINSVFM (291 aa). 6 helical membrane passes run 22–42, 68–88, 146–166, 167–187, 248–268, and 285–305; these read WILAGANLLLAGAQFAEPVLF, LLAVWAAFGLFTILCGVTVAL, EHFAAMMSLVVLLPLSLYINW, RLAILLFALCIVFTMLTTLVV, WWAVVTVMTRASTTITILAIF, and IVMFVSFATMLIQRLEQVVSF. One can recognise an ABC transporter domain in the interval 345-579; that stretch reads VEFNDVSFSY…GGHFAQLAKA (235 aa). 378 to 385 contributes to the ATP binding site; that stretch reads GPTGAGKS.

The protein belongs to the ABC transporter superfamily. Beta-(1--&gt;2)glucan exporter (TC 3.A.1.108.1) family. Homodimer.

It is found in the cell inner membrane. It catalyses the reaction [(1-&gt;2)-beta-D-glucosyl](n)(in) + ATP + H2O = [(1-&gt;2)-beta-D-glucosyl](n)(out) + ADP + phosphate + H(+). In terms of biological role, involved in beta-(1--&gt;2)glucan export. Transmembrane domains (TMD) form a pore in the inner membrane and the ATP-binding domain (NBD) is responsible for energy generation. The sequence is that of Beta-(1--&gt;2)glucan export ATP-binding/permease protein NdvA from Nitrobacter winogradskyi (strain ATCC 25391 / DSM 10237 / CIP 104748 / NCIMB 11846 / Nb-255).